Reading from the N-terminus, the 1010-residue chain is MYLDRFRQCPSSLQIPRSAWRLHALAAALALAGMARLAPAAAQAPQPPVAGAPHAQDAGQEGEFDHRDNTLIAVFDDGVGINLDDDPDELGETAPPTLKDIHISVEHKNPMSKPAIGVRVSGAGRALTLAGSTIDATEGGIPAVVRRGGTLELDGVTVAGGEGMEPMTVSDAGSRLSVRGGVLGGEAPGVGLVRAAQGGQASIIDATLQSILGPALIADGGSISVAGGSIDMDMGPGFPPPPPPLPGAPLAAHPPLDRVAAVHAGQDGKVTLREVALRAHGPQATGVYAYMPGSEITLQGGTVSVQGDDGAGVVAGAGLLDALPPGGTVRLDGTTVSTDGANTDAVLVRGDAARAEVVNTVLRTAKSLAAGVSAQHGGRVTLRQTRIETAGAGAEGISVLGFEPQSGSGPASVDMQGGSITTTGNRAAGIALTHGSARLEGVAVRAEGSGSSAAQLANGTLVVSAGSLASAQSGAISVTDTPLKLMPGALASSTVSVRLTDGATAQGGNGVFLQQHSTIPVAVALESGALARGDIVADGNKPLDAGISLSVASGAAWHGATQVLQSATLGKGGTWVVNADSRVQDMSMRGGRVEFQAPAPEASYKTLTLQTLDGNGVFVLNTNVAAGQNDQLRVTGRADGQHRVLVRNAGGEADSRGARLGLVHTQGQGNATFRLANVGKAVDLGTWRYSLAEDPKTHVWSLQRAGQALSGAANAAVNAADLSSIALAESNALDKRLGELRLRADAGGPWARTFSERQQISNRHARAYDQTVSGLEIGLDRGWSASGGRWYAGGLLGYTYADRTYPGDGGGKVKGLHVGGYAAYVGDGGYYLDTVLRLGRYDQQYNIAGTDGGRVTADYRTSGAAWSLEGGRRFELPNDWFAEPQAEVMLWRTSGKRYRASNGLRVKVDANTATLGRLGLRFGRRIALAGGNIVQPYARLGWTQEFKSTGDVRTNGIGHAGAGRHGRVELGAGVDAALGKGHNLYASYEYAAGDRINIPWSFHAGYRYSF.

The first 42 residues, M1–A42, serve as a signal peptide directing secretion. The Autotransporter domain occupies L742–F1010.

It localises to the periplasm. The protein localises to the secreted. The protein resides in the cell surface. Its subcellular location is the cell outer membrane. Its function is as follows. Inhibits the classical pathway of complement activation and prevents accumulation of deposited C4. In Bordetella pertussis (strain Tohama I / ATCC BAA-589 / NCTC 13251), this protein is BrkA autotransporter.